The following is a 63-amino-acid chain: Overexpressed in colon carcinoma 1 protein homolog (63 aa).

Positions 1–12 (MGCGNSTAASAG) are enriched in low complexity. Residues 1-40 (MGCGNSTAASAGAGQGPAGAAKDVTEESITEDDKRRNYGG) form a disordered region.

It belongs to the OCC1 family.

In Bos taurus (Bovine), this protein is Overexpressed in colon carcinoma 1 protein homolog.